The sequence spans 988 residues: Voltage-gated delayed rectifier potassium channel KCNH5 (988 aa).

At 1–217 (MPGGKRGLVA…LHYCAFKTTW (217 aa)) the chain is on the cytoplasmic side. The 79-residue stretch at 12 to 90 (QNTFLENIVR…VRQTFDNYES (79 aa)) folds into the PAS domain. Residues 91 to 143 (NCFEVLLYKKNRTPVWFYMQIAPIRNEHEKVVLFLCTFKDITLFKQPIEDDST) enclose the PAC domain. A helical transmembrane segment spans residues 218 to 238 (DWVILILTFYTAIMVPYNVSF). Over 239 to 243 (KTKQN) the chain is Extracellular. Residues 244-264 (NIAWLVLDSVVDVIFLVDIVL) traverse the membrane as a helical segment. Residues 265 to 291 (NFHTTFVGPGGEVISDPKLIRMNYLKT) are Cytoplasmic-facing. Residues 292-312 (WFVIDLLSCLPYDIINAFENV) traverse the membrane as a helical segment. Residues 313 to 319 (DEGISSL) are Extracellular-facing. A helical; Voltage-sensor membrane pass occupies residues 320–340 (FSSLKVVRLLRLGRVARKLDH). Topologically, residues 341 to 346 (YLEYGA) are cytoplasmic. Residues 347-367 (AVLVLLVCVFGLVAHWLACIW) traverse the membrane as a helical segment. At 368-419 (YSIGDYEVIDEVTNTIQIDSWLYQLALSIGTPYRYNTSAGIWEGGPSKDSLY) the chain is on the extracellular side. N403 is a glycosylation site (N-linked (GlcNAc...) asparagine). Positions 420-440 (VSSLYFTMTSLTTIGFGNIAP) form an intramembrane region, pore-forming. Residues 432 to 437 (TIGFGN) carry the Selectivity filter motif. Topologically, residues 441 to 446 (TTDVEK) are extracellular. A helical transmembrane segment spans residues 447-467 (MFSVAMMMVGSLLYATIFGNV). Residues 468 to 988 (TTIFQQMYAN…PESDKDEIHF (521 aa)) lie on the Cytoplasmic side of the membrane. Residue 550–667 (AFRLASDGCL…NSFSRNLTLT (118 aa)) participates in a nucleoside 3',5'-cyclic phosphate binding. Positions 704 to 715 (HPVRKLFQKFKQ) are calmodulin-binding. The tract at residues 717–742 (KELRNQGSTQGDPERNQLQVESRSLQ) is disordered. A compositionally biased stretch (polar residues) spans 721–742 (NQGSTQGDPERNQLQVESRSLQ). K785 is covalently cross-linked (Glycyl lysine isopeptide (Lys-Gly) (interchain with G-Cter in ubiquitin)). Residues 838-890 (GLLSEDPKSSDSENSVTKNPLRKTDSCDSGITKSDLRLDKAGEARSPLEHSPI) are disordered. Basic and acidic residues predominate over residues 871 to 885 (SDLRLDKAGEARSPL). S883 bears the Phosphoserine mark. Residues 909–948 (TLQEVKHELKEDIQLLSCRMTALEKQVAEILKILSEKSVP) are CAD (involved in subunit assembly). The tract at residues 969-988 (DIFSVSRPESPESDKDEIHF) is disordered. Residues 977 to 988 (ESPESDKDEIHF) show a composition bias toward basic and acidic residues.

The protein belongs to the potassium channel family. H (Eag) (TC 1.A.1.20) subfamily. Kv10.2/KCNH5 sub-subfamily. As to quaternary structure, homotetramer. The potassium channel is probably composed of a homo- or heterotetrameric complex of pore-forming alpha subunits that can associate with modulating beta subunits. Heteromultimer with KCNH1/EAG. In terms of tissue distribution, detected in brain, skeletal muscle, heart, placenta, lung and liver, and at low levels in kidney.

The protein localises to the membrane. It catalyses the reaction K(+)(in) = K(+)(out). In terms of biological role, pore-forming (alpha) subunit of a voltage-gated delayed rectifier potassium channel that mediates outward-rectifying potassium currents which, on depolarization, reaches a steady-state level and do not inactivate. The kinetic is characterized by a slow activation time course and a small voltage dependence of the activation time constants, therefore, starts to open at more negative voltages. The activation kinetics depend on the prepulse potential and external divalent cation concentration. The time course of activation is biphasic with a fast and a slowly activating current component. With negative prepulses, the current activation is delayed and slowed down several fold, whereas more positive prepulses speed up activation, therefore the activation rate depends on holding potential. This Homo sapiens (Human) protein is Voltage-gated delayed rectifier potassium channel KCNH5.